The following is a 320-amino-acid chain: Heterogeneous nuclear ribonucleoprotein A1-like 2 (320 aa).

A globular A domain region spans residues 4–94 (SASPKEPEQL…EPKRAVSRED (91 aa)). A phosphoserine mark is found at serine 6 and serine 22. RRM domains follow at residues 14–97 (RKLF…DSQR) and 105–184 (KKIF…LPKQ). The interval 95–185 (SQRPGAHLTV…EVRKALPKQE (91 aa)) is globular B domain. Residues 181-216 (LPKQEMASASSSQRGRRGSGNFGGGRGDGFGGNDNF) are disordered. Residues arginine 194, arginine 206, arginine 218, and arginine 225 each carry the asymmetric dimethylarginine; alternate modification. Arginine 194, arginine 206, arginine 218, and arginine 225 each carry omega-N-methylarginine; alternate. Residues 198-216 (GSGNFGGGRGDGFGGNDNF) are compositionally biased toward gly residues. The segment at 218-240 (RGGNFSGRGGFGGSCGGGGYGGS) is RNA-binding RGG-box. Residues 268–305 (NQSSNFGPMKGGNFGGRSSGPYGGGGQYFAKPQNQGGY) are nuclear targeting sequence. The interval 271 to 320 (SNFGPMKGGNFGGRSSGPYGGGGQYFAKPQNQGGYGVSSSSSSYGSGRRF) is disordered. Gly residues predominate over residues 276–294 (MKGGNFGGRSSGPYGGGGQ). An Omega-N-methylarginine modification is found at arginine 284. Lysine 298 bears the N6-acetyllysine mark. Residues 307–320 (VSSSSSSYGSGRRF) are compositionally biased toward low complexity.

It is found in the nucleus. The protein resides in the cytoplasm. Functionally, involved in the packaging of pre-mRNA into hnRNP particles, transport of poly(A) mRNA from the nucleus to the cytoplasm and may modulate splice site selection. This Homo sapiens (Human) protein is Heterogeneous nuclear ribonucleoprotein A1-like 2 (HNRNPA1L2).